Here is a 947-residue protein sequence, read N- to C-terminus: Translation initiation factor IF-2 (947 aa).

The segment at 69 to 353 (RRRKEVPQEE…TPKPQKKTEV (285 aa)) is disordered. Residues 81-108 (APPAAAEEPSSVDTAVAEEAPAEEVQPV) are compositionally biased toward low complexity. A compositionally biased stretch (acidic residues) spans 139 to 155 (PVVEEVIAEPAVEEVVE). 2 stretches are compositionally biased toward basic and acidic residues: residues 215–226 (VTKEKPKVEKAT) and 246–262 (KRQE…ERPK). Positions 264 to 284 (AKPSGGPAPRAKEAAPQAAVP) are enriched in low complexity. Residues 327 to 337 (QVYEPERDERR) show a composition bias toward basic and acidic residues. Basic residues predominate over residues 338-348 (MRRGKKTPKPQ). The tr-type G domain maps to 447-616 (PRPPVVTIMG…LLQAEVLELK (170 aa)). Residues 456–463 (GHVDHGKT) are G1. Residue 456–463 (GHVDHGKT) coordinates GTP. Residues 481–485 (GITQH) form a G2 region. The interval 502-505 (DTPG) is G3. GTP is bound by residues 502–506 (DTPGH) and 556–559 (NKMD). The G4 stretch occupies residues 556–559 (NKMD). Residues 592–594 (SAK) form a G5 region.

Belongs to the TRAFAC class translation factor GTPase superfamily. Classic translation factor GTPase family. IF-2 subfamily.

The protein localises to the cytoplasm. Its function is as follows. One of the essential components for the initiation of protein synthesis. Protects formylmethionyl-tRNA from spontaneous hydrolysis and promotes its binding to the 30S ribosomal subunits. Also involved in the hydrolysis of GTP during the formation of the 70S ribosomal complex. The sequence is that of Translation initiation factor IF-2 from Syntrophotalea carbinolica (strain DSM 2380 / NBRC 103641 / GraBd1) (Pelobacter carbinolicus).